The following is a 335-amino-acid chain: Fructose-1,6-bisphosphatase class 1 (335 aa).

Glu92, Asp114, Leu116, and Asp117 together coordinate Mg(2+). Substrate-binding positions include 117–120 (DGSS), Asn209, and Lys275. Mg(2+) is bound at residue Glu281.

It belongs to the FBPase class 1 family. Homotetramer. Requires Mg(2+) as cofactor.

It localises to the cytoplasm. It catalyses the reaction beta-D-fructose 1,6-bisphosphate + H2O = beta-D-fructose 6-phosphate + phosphate. It functions in the pathway carbohydrate biosynthesis; gluconeogenesis. This is Fructose-1,6-bisphosphatase class 1 from Paracidovorax citrulli (strain AAC00-1) (Acidovorax citrulli).